The sequence spans 133 residues: DNA-directed RNA polymerases I, II, and III subunit rpabc2 (133 aa).

The span at 1–32 (MADFEGGGDDGGYEEFDEGGGFEEEYVEETET) shows a compositional bias: acidic residues. Positions 1–55 (MADFEGGGDDGGYEEFDEGGGFEEEYVEETETTEAYTDIIDPSADANTAEAGRIP) are disordered.

The protein belongs to the archaeal Rpo6/eukaryotic RPB6 RNA polymerase subunit family. In terms of assembly, component of the RNA polymerase I (Pol I), RNA polymerase II (Pol II) and RNA polymerase III (Pol III) complexes consisting of at least 13, 12 and 17 subunits, respectively.

It localises to the nucleus. DNA-dependent RNA polymerases catalyze the transcription of DNA into RNA using the four ribonucleoside triphosphates as substrates. Common component of RNA polymerases I, II and III which synthesize ribosomal RNA precursors, mRNA precursors and many functional non-coding RNAs, and small RNAs, such as 5S rRNA and tRNAs, respectively. Pol II is the central component of the basal RNA polymerase II transcription machinery. Pols are composed of mobile elements that move relative to each other. In Pol II, RPB6 is part of the clamp element and together with parts of RPB1 and RPB2 forms a pocket to which the RPB4-RPB7 subcomplex binds. This is DNA-directed RNA polymerases I, II, and III subunit rpabc2 (polr2f) from Dictyostelium discoideum (Social amoeba).